Consider the following 61-residue polypeptide: UPF0391 membrane protein Bpro_0066 (61 aa).

A run of 2 helical transmembrane segments spans residues 5-25 (AIIF…GVAA) and 33-53 (ILFG…ALGV).

It belongs to the UPF0391 family.

The protein localises to the cell membrane. This Polaromonas sp. (strain JS666 / ATCC BAA-500) protein is UPF0391 membrane protein Bpro_0066.